A 695-amino-acid chain; its full sequence is Transketolase (695 aa).

Residue H37 participates in substrate binding. Residues H77 and 126-128 (GPL) contribute to the thiamine diphosphate site. A Mg(2+)-binding site is contributed by D164. Thiamine diphosphate is bound by residues G165 and N194. Mg(2+)-binding residues include N194 and I196. Substrate contacts are provided by H268, R361, and S388. H268 is a thiamine diphosphate binding site. Catalysis depends on E415, which acts as the Proton donor. F441 contacts thiamine diphosphate. 3 residues coordinate substrate: H465, D473, and R524.

Belongs to the transketolase family. Homodimer. Mg(2+) serves as cofactor. Requires Ca(2+) as cofactor. It depends on Mn(2+) as a cofactor. Co(2+) is required as a cofactor. The cofactor is thiamine diphosphate.

The catalysed reaction is D-sedoheptulose 7-phosphate + D-glyceraldehyde 3-phosphate = aldehydo-D-ribose 5-phosphate + D-xylulose 5-phosphate. Its pathway is carbohydrate biosynthesis; Calvin cycle. In terms of biological role, catalyzes the transfer of a two-carbon ketol group from a ketose donor to an aldose acceptor, via a covalent intermediate with the cofactor thiamine pyrophosphate. This is Transketolase (cbbT) from Sinorhizobium medicae (strain WSM419) (Ensifer medicae).